We begin with the raw amino-acid sequence, 128 residues long: 3-aminoacrylate deaminase RutC (128 aa).

It belongs to the RutC family.

It catalyses the reaction (Z)-3-aminoacrylate + H2O + H(+) = 3-oxopropanoate + NH4(+). Functionally, involved in pyrimidine catabolism. Catalyzes the deamination of 3-aminoacrylate to malonic semialdehyde, a reaction that can also occur spontaneously. RutC may facilitate the reaction and modulate the metabolic fitness, rather than catalyzing essential functions. The chain is 3-aminoacrylate deaminase RutC from Azorhizobium caulinodans (strain ATCC 43989 / DSM 5975 / JCM 20966 / LMG 6465 / NBRC 14845 / NCIMB 13405 / ORS 571).